Here is a 260-residue protein sequence, read N- to C-terminus: Dehydrogenase/reductase SDR family member 4 (260 aa).

18 to 42 (IVTASTDGIGLAIARRLAQDGAHVV) contributes to the NADP(+) binding site. Lysine 74 carries the post-translational modification N6-acetyllysine; alternate. At lysine 74 the chain carries N6-succinyllysine; alternate. Serine 151 contributes to the substrate binding site. Residue tyrosine 164 is the Proton acceptor of the active site. Lysine 168 provides a ligand contact to NADP(+). Lysine 198 carries the N6-acetyllysine; alternate modification. Lysine 198 carries the post-translational modification N6-succinyllysine; alternate. Residue serine 202 is modified to Phosphoserine. Lysine 209 bears the N6-succinyllysine mark. The Peroxisomal targeting signal signature appears at 258–260 (SRL).

It belongs to the short-chain dehydrogenases/reductases (SDR) family. In terms of assembly, homotetramer. In terms of tissue distribution, detected in liver and kidney. Detected at lower levels in heart, lung, spleen, small intestine, testis, brain and stomach.

It is found in the peroxisome. It carries out the reaction a secondary alcohol + NADP(+) = a ketone + NADPH + H(+). The enzyme catalyses 3alpha-hydroxy-5beta-pregnan-20-one + NADP(+) = 5beta-pregnan-3,20-dione + NADPH + H(+). The catalysed reaction is 5beta-dihydrotestosterone + NADPH + H(+) = 5beta-androstane-3alpha,17beta-diol + NADP(+). It catalyses the reaction all-trans-retinol + NADP(+) = all-trans-retinal + NADPH + H(+). It carries out the reaction isatin + NADPH + H(+) = 3-hydroxyindolin-2-one + NADP(+). Its activity is regulated as follows. Inhibited by flavonoids (kaempferol, quercetin, quercitrin, genistein), myristic acid, pyrazole, barbital, phenobarbital and CuSO4. Functionally, NADPH-dependent oxidoreductase which catalyzes the reduction of a variety of compounds bearing carbonyl groups including ketosteroids, alpha-dicarbonyl compounds, aldehydes, aromatic ketones and quinones. Reduces all-trans-retinal and 9-cis retinal. Reduces 3-ketosteroids and benzil into 3alpha-hydroxysteroids and S-benzoin, respectively, in contrast to the stereoselectivity of primates DHRS4s which produce 3beta-hydroxysteroids and R-benzoin. In the reverse reaction, catalyze the NADP-dependent oxidation of 3alpha-hydroxysteroids and alcohol, but with much lower efficiency. Involved in the metabolism of 3alpha-hydroxysteroids, retinoid, isatin and xenobiotic carbonyl compounds. This chain is Dehydrogenase/reductase SDR family member 4 (DHRS4), found in Oryctolagus cuniculus (Rabbit).